The following is a 408-amino-acid chain: LL-diaminopimelate aminotransferase (408 aa).

Tyr-15 and Gly-42 together coordinate substrate. Residues Tyr-72, 108–109, Tyr-132, Asn-187, Tyr-218, and 246–248 each bind pyridoxal 5'-phosphate; these read SK and SFS. 3 residues coordinate substrate: Lys-109, Tyr-132, and Asn-187. Lys-249 bears the N6-(pyridoxal phosphate)lysine mark. Pyridoxal 5'-phosphate is bound by residues Arg-257 and Asn-292. Substrate-binding residues include Asn-292 and Arg-388.

This sequence belongs to the class-I pyridoxal-phosphate-dependent aminotransferase family. LL-diaminopimelate aminotransferase subfamily. As to quaternary structure, homodimer. It depends on pyridoxal 5'-phosphate as a cofactor.

It catalyses the reaction (2S,6S)-2,6-diaminopimelate + 2-oxoglutarate = (S)-2,3,4,5-tetrahydrodipicolinate + L-glutamate + H2O + H(+). It participates in amino-acid biosynthesis; L-lysine biosynthesis via DAP pathway; LL-2,6-diaminopimelate from (S)-tetrahydrodipicolinate (aminotransferase route): step 1/1. In terms of biological role, involved in the synthesis of meso-diaminopimelate (m-DAP or DL-DAP), required for both lysine and peptidoglycan biosynthesis. Catalyzes the direct conversion of tetrahydrodipicolinate to LL-diaminopimelate. The polypeptide is LL-diaminopimelate aminotransferase (Prochlorococcus marinus (strain MIT 9303)).